Consider the following 244-residue polypeptide: NAD(P)H-quinone oxidoreductase subunit K (244 aa).

Residues cysteine 51, cysteine 52, cysteine 116, and cysteine 147 each contribute to the [4Fe-4S] cluster site.

It belongs to the complex I 20 kDa subunit family. NDH-1 can be composed of about 15 different subunits; different subcomplexes with different compositions have been identified which probably have different functions. [4Fe-4S] cluster serves as cofactor.

It localises to the cellular thylakoid membrane. The enzyme catalyses a plastoquinone + NADH + (n+1) H(+)(in) = a plastoquinol + NAD(+) + n H(+)(out). It carries out the reaction a plastoquinone + NADPH + (n+1) H(+)(in) = a plastoquinol + NADP(+) + n H(+)(out). NDH-1 shuttles electrons from an unknown electron donor, via FMN and iron-sulfur (Fe-S) centers, to quinones in the respiratory and/or the photosynthetic chain. The immediate electron acceptor for the enzyme in this species is believed to be plastoquinone. Couples the redox reaction to proton translocation, and thus conserves the redox energy in a proton gradient. Cyanobacterial NDH-1 also plays a role in inorganic carbon-concentration. This is NAD(P)H-quinone oxidoreductase subunit K from Synechococcus sp. (strain JA-3-3Ab) (Cyanobacteria bacterium Yellowstone A-Prime).